The sequence spans 331 residues: Anthranilate phosphoribosyltransferase (331 aa).

5-phospho-alpha-D-ribose 1-diphosphate contacts are provided by residues G79, 82 to 83 (GD), S87, 89 to 92 (NIST), 107 to 115 (KHCNGNISS), and S119. G79 contributes to the anthranilate binding site. S91 provides a ligand contact to Mg(2+). Position 110 (N110) interacts with anthranilate. Position 165 (R165) interacts with anthranilate. 2 residues coordinate Mg(2+): D223 and E224.

Belongs to the anthranilate phosphoribosyltransferase family. In terms of assembly, homodimer. It depends on Mg(2+) as a cofactor.

It catalyses the reaction N-(5-phospho-beta-D-ribosyl)anthranilate + diphosphate = 5-phospho-alpha-D-ribose 1-diphosphate + anthranilate. The protein operates within amino-acid biosynthesis; L-tryptophan biosynthesis; L-tryptophan from chorismate: step 2/5. Catalyzes the transfer of the phosphoribosyl group of 5-phosphorylribose-1-pyrophosphate (PRPP) to anthranilate to yield N-(5'-phosphoribosyl)-anthranilate (PRA). The protein is Anthranilate phosphoribosyltransferase of Buchnera aphidicola subsp. Baizongia pistaciae (strain Bp).